We begin with the raw amino-acid sequence, 156 residues long: Small ribosomal subunit protein uS7 (156 aa).

This sequence belongs to the universal ribosomal protein uS7 family. In terms of assembly, part of the 30S ribosomal subunit. Contacts proteins S9 and S11.

One of the primary rRNA binding proteins, it binds directly to 16S rRNA where it nucleates assembly of the head domain of the 30S subunit. Is located at the subunit interface close to the decoding center, probably blocks exit of the E-site tRNA. The chain is Small ribosomal subunit protein uS7 from Campylobacter hominis (strain ATCC BAA-381 / DSM 21671 / CCUG 45161 / LMG 19568 / NCTC 13146 / CH001A).